The primary structure comprises 228 residues: Glyceraldehyde 3-phosphate phosphatase (228 aa).

The protein belongs to the HAD-like hydrolase superfamily. Mg(2+) serves as cofactor.

In terms of biological role, catalyzes the dephosphorylation of D,L-glyceraldehyde 3-phosphate in vitro. The protein is Glyceraldehyde 3-phosphate phosphatase of Methanocaldococcus jannaschii (strain ATCC 43067 / DSM 2661 / JAL-1 / JCM 10045 / NBRC 100440) (Methanococcus jannaschii).